Consider the following 618-residue polypeptide: DNA ligase 2 (618 aa).

The segment covering 197-208 (DKKTLESREDAK) has biased composition (basic and acidic residues). A disordered region spans residues 197-250 (DKKTLESREDAKSVPPASQPEITNKISGDTSPNTSESVQTKKSDPDTSSNVDPS). Residues 216–234 (PEITNKISGDTSPNTSESV) are compositionally biased toward polar residues. Glu-312 provides a ligand contact to ATP. Lys-314 functions as the N6-AMP-lysine intermediate in the catalytic mechanism. Residues Arg-319, Arg-334, Glu-363, Phe-403, Arg-476, and Lys-482 each coordinate ATP. The tract at residues 459-480 (HEGVMLKDPDSTYNPGSRGQHW) is disordered.

This sequence belongs to the ATP-dependent DNA ligase family. It depends on Mg(2+) as a cofactor.

It catalyses the reaction ATP + (deoxyribonucleotide)n-3'-hydroxyl + 5'-phospho-(deoxyribonucleotide)m = (deoxyribonucleotide)n+m + AMP + diphosphate.. In terms of biological role, DNA ligase that seals nicks in double-stranded DNA during DNA replication, DNA recombination and DNA repair. The polypeptide is DNA ligase 2 (Haloquadratum walsbyi (strain DSM 16790 / HBSQ001)).